Reading from the N-terminus, the 375-residue chain is Growth/differentiation factor 8 (375 aa).

An N-terminal signal peptide occupies residues 1–18 (MQKLQISVYIYLFVLILA). Positions 19–266 (GPVDLNENSE…VTDTPKRSRR (248 aa)) are excised as a propeptide. An N-linked (GlcNAc...) asparagine glycan is attached at Asn71. Intrachain disulfides connect Cys272-Cys282, Cys281-Cys340, Cys309-Cys372, and Cys313-Cys374.

It belongs to the TGF-beta family. Homodimer; disulfide-linked. Interacts with WFIKKN2, leading to inhibit its activity. Interacts with FSTL3. Post-translationally, synthesized as large precursor molecule that undergoes proteolytic cleavage to generate an N-terminal propeptide and a disulfide linked C-terminal dimer, which is the biologically active molecule. The circulating form consists of a latent complex of the C-terminal dimer and other proteins, including its propeptide, which maintain the C-terminal dimer in a latent, inactive state. Ligand activation requires additional cleavage of the prodomain by a tolloid-like metalloproteinase.

It localises to the secreted. Acts specifically as a negative regulator of skeletal muscle growth. The sequence is that of Growth/differentiation factor 8 (MSTN) from Equus caballus (Horse).